Here is a 324-residue protein sequence, read N- to C-terminus: Beta-ketoacyl-[acyl-carrier-protein] synthase III (324 aa).

Active-site residues include C116 and H251. The segment at 252-256 (QANLR) is ACP-binding. Residue N281 is part of the active site.

It belongs to the thiolase-like superfamily. FabH family. As to quaternary structure, homodimer.

Its subcellular location is the cytoplasm. The catalysed reaction is malonyl-[ACP] + acetyl-CoA + H(+) = 3-oxobutanoyl-[ACP] + CO2 + CoA. It participates in lipid metabolism; fatty acid biosynthesis. Its function is as follows. Catalyzes the condensation reaction of fatty acid synthesis by the addition to an acyl acceptor of two carbons from malonyl-ACP. Catalyzes the first condensation reaction which initiates fatty acid synthesis and may therefore play a role in governing the total rate of fatty acid production. Possesses both acetoacetyl-ACP synthase and acetyl transacylase activities. Its substrate specificity determines the biosynthesis of branched-chain and/or straight-chain of fatty acids. The polypeptide is Beta-ketoacyl-[acyl-carrier-protein] synthase III (Xylella fastidiosa (strain Temecula1 / ATCC 700964)).